The chain runs to 555 residues: MSEAEARPTNFIRQIIDEDLASGKHTTVHTRFPPEPNGYLHIGHAKSICLNFGIAQDYQGQCNLRFDDTNPVKEDIEYVDSIKNDVEWLGFHWSGDIRYSSDYFDQLHAYAVELINKGLAYVDELTPEQIREYRGTLTAPGKNSPFRDRSVEENLALFEKMRTGGFEEGKACLRAKIDMASPFIVMRDPVLYRIKFAEHHQTGNKWCIYPMYDFTHCISDALEGITHSLCTLEFQDNRRLYDWVLDNITIPVHPRQYEFSRLNLEYTVMSKRKLNLLVTDKHVEGWDDPRMPTISGLRRRGYTAASIREFCKRIGVTKQDNTIEMASLESCIREDLNENAPRAMAVIDPVKLVIENYPQGESEMVTMPNHPNKPEMGSREVPFSGEIWIDRADFREEANKQYKRLVMGKEVRLRNAYVIKAERVEKDAEGNITTIFCTYDADTLSKDPADGRKVKGVIHWVSAAHALPIEIRLYDRLFSVPNPGTAEDFLSVINPESLVIKQGYGEPSLKAAVAGKAFQFEREGYFCLDSCYATADKLVFNRTVGLRDTWAKAGE.

Residues 34–44 (PEPNGYLHIGH) carry the 'HIGH' region motif. ATP contacts are provided by residues 35–37 (EPN) and 41–47 (HIGHAKS). L-glutamine-binding residues include Asp67 and Tyr212. ATP-binding positions include Thr231, 261-262 (RL), and 269-271 (MSK). Residues 268–272 (VMSKR) carry the 'KMSKS' region motif. The interval 317–324 (TKQDNTIE) is interaction with tRNA.

The protein belongs to the class-I aminoacyl-tRNA synthetase family. In terms of assembly, monomer.

The protein resides in the cytoplasm. The catalysed reaction is tRNA(Gln) + L-glutamine + ATP = L-glutaminyl-tRNA(Gln) + AMP + diphosphate. The protein is Glutamine--tRNA ligase of Salmonella choleraesuis (strain SC-B67).